Consider the following 508-residue polypeptide: MGLPWYRVHTVVLNDPGRLLSVHIMHTALVAGWAGSMALYELAVFDPSDPVLDPMWRQGMFVIPFMTRLGITNSWGGWSITGGTITNPGLWSYEGVAGAHIVFSGLCFLAAIWHWVYWDLEIFCDERTGKPSLDLPKIFGIHLFLSGVACFGFGAFHVTGLYGPGIWVSDPYGLTGKVQPVNPAWGVEGFDPFVPGGIASHHIAAGTLGILAGLFHLSVRPPQRLYKGLRMGNIETVLSSSIAAVFFAAFVVAGTMWYGSATTPIELFGPTRYQWDQGYFQQEIYRRVSAGLAENQSLSEAWSKIPEKLAFYDYIGNNPAKGGLFRAGSMDNGDGIAVGWLGHPIFRDKEGRELFVRRMPTFFETFPVVLVDGDGIVRADVPFRRAESKYSVEQVGVTVEFYGGELNGVSYSDPATVKKYARRAQLGEIFELDRATLKSDGVFRSSPRGWFTFGHASFALLFFFGHIWHGARTLFRDVFAGIDPDLDAQVEFGAFQKLGDPTTRRQVV.

6 helical membrane-spanning segments follow: residues 21–36 (SVHI…WAGS), 101–115 (IVFS…IWHW), 140–156 (GIHL…FGAF), 203–218 (IAAG…FHLS), 237–252 (VLSS…AFVV), and 457–472 (SFAL…HGAR).

It belongs to the PsbB/PsbC family. PsbB subfamily. In terms of assembly, PSII is composed of 1 copy each of membrane proteins PsbA, PsbB, PsbC, PsbD, PsbE, PsbF, PsbH, PsbI, PsbJ, PsbK, PsbL, PsbM, PsbT, PsbX, PsbY, PsbZ, Psb30/Ycf12, at least 3 peripheral proteins of the oxygen-evolving complex and a large number of cofactors. It forms dimeric complexes. Binds multiple chlorophylls. PSII binds additional chlorophylls, carotenoids and specific lipids. is required as a cofactor.

It is found in the plastid. Its subcellular location is the chloroplast thylakoid membrane. In terms of biological role, one of the components of the core complex of photosystem II (PSII). It binds chlorophyll and helps catalyze the primary light-induced photochemical processes of PSII. PSII is a light-driven water:plastoquinone oxidoreductase, using light energy to abstract electrons from H(2)O, generating O(2) and a proton gradient subsequently used for ATP formation. This is Photosystem II CP47 reaction center protein from Carica papaya (Papaya).